Here is a 494-residue protein sequence, read N- to C-terminus: Catalase isozyme 2 (494 aa).

Positions 1–29 are disordered; it reads MDPCKFRPSSSFDTKTTTTNAGQPVWNDN. Over residues 8–22 the composition is skewed to polar residues; that stretch reads PSSSFDTKTTTTNAG. Residues histidine 65 and asparagine 138 contribute to the active site. Tyrosine 348 is a heme binding site.

This sequence belongs to the catalase family. In terms of assembly, homotetramer. Heme serves as cofactor.

Its subcellular location is the peroxisome. The protein localises to the glyoxysome. It carries out the reaction 2 H2O2 = O2 + 2 H2O. Occurs in almost all aerobically respiring organisms and serves to protect cells from the toxic effects of hydrogen peroxide. This is Catalase isozyme 2 (CAT2) from Hordeum vulgare (Barley).